The chain runs to 586 residues: MATSGVEKSSKKKTEKKLAAREEAKLLAGFMGVMNNMRKQRTLCDVILTVQERKIPAHRVVLAAASHFFNLMFTTNMLESKSFEVELKDAEPDIIEQLVEFAYTARISVNSNNVQSLLDAANQYQIEPVKKMCVDFLKEQVDASNCLGISVLAECLDCPELKATADDFIHQHFTEVYKTDEFLQLDVKRVTHLLSQDTLTVRAEDQVYDAAVRWLKYDEPNRQPFMVDILAKVRFPLISKNFLSKTVQAEPLIQDNPECLKMVISGMRYHLLSPEDREELAGGTRPRRKKHDYRIALFGGSQPQSCRYFNPKDYSWTDIRCPFEKRRDAACVFWDNVVYILGGSQLFPIKRMDCYNVVKDSWYSKLGPPTPRDSLAACAAEGKIYTSGGSEVGNSALYLFECYDTRTESWHTKPSMLTQRCSHGMVEANGLIYVCGGSLGNNVSGRVLSSCEVYDPATETWTELCSMIEPRKNHGLVFVKDKIFAVGGQNGLGGLDNVEYYDIKLNEWKMVSPMPWRGVTVKCAAVGSVIYVLAGFQGVGRLGHILEYNTETDKWIANSKVRAFPVTSCLICVVDTCGANEETLET.

Residues 44 to 111 (CDVILTVQER…AYTARISVNS (68 aa)) form the BTB domain. A BACK domain is found at 146 to 248 (CLGISVLAEC…SKNFLSKTVQ (103 aa)). 6 Kelch repeats span residues 294–336 (RIAL…FWDN), 337–382 (VVYI…AAEG), 383–430 (KIYT…EANG), 431–481 (LIYV…FVKD), 483–528 (IFAV…AVGS), and 530–575 (IYVL…CVVD).

Homodimer. Component of the BCR(KLHL7) E3 ubiquitin ligase complex, at least composed of CUL3 and KLHL7 and RBX1.

It localises to the nucleus. The protein resides in the cytoplasm. It participates in protein modification; protein ubiquitination. Its function is as follows. Substrate-specific adapter of a BCR (BTB-CUL3-RBX1) E3 ubiquitin ligase complex. The BCR(KLHL7) complex acts by mediating ubiquitination and subsequent degradation of substrate proteins. Probably mediates 'Lys-48'-linked ubiquitination. The protein is Kelch-like protein 7 (Klhl7) of Mus musculus (Mouse).